Here is a 920-residue protein sequence, read N- to C-terminus: Urea transporter 2 (920 aa).

The segment at 25-57 (FTSPSWPSTSPDTHPALPLLEMPEEKDLRSSNE) is disordered. Over residues 26-39 (TSPSWPSTSPDTHP) the composition is skewed to low complexity. Residues 47 to 57 (PEEKDLRSSNE) are compositionally biased toward basic and acidic residues. The next 9 helical transmembrane spans lie at 151–170 (WWTITGGLGTVVSTLTALAL), 176–196 (AIASGLHGYNGMLVGLLMAVF), 204–224 (WWLLFPVTFTAMSCPVLSSAL), 233–253 (LPVFTLPFNIAVTLYLAATGH), 272–291 (ITWTEMEMPLLLQAIPVGVG), 302–322 (GGVFLVALFISSPLICLHAAI), 346–366 (WSYNCVLSCIAIGGMFYALTW), 370–390 (LLALICALFCAYMEAAISNIM), and 392–412 (VVGVPPGTWAFCLATIIFLLL). Positions 446-467 (EKAPSGGGGEHPPTAGPKVEEG) are disordered. At Ser-477 the chain carries Phosphoserine. A run of 4 helical transmembrane segments spans residues 600–620 (GILIILGLFIQNPWWAISGCL), 638–658 (AIAAGFHGYNGVLVGLLMAVF), 666–686 (WWLLLPVIIMSMSCPILSSAL), and 695–715 (LPVFTLPFNITVTLYLAATGH). An N-linked (GlcNAc...) asparagine glycan is attached at Asn-733. 4 consecutive transmembrane segments (helical) span residues 764 to 784 (GGIFLIALFISSPLICLHAAI), 803 to 823 (IYFGLCGFNSTLACIAIGGMF), 832 to 852 (LLAIACALFAAYLGAALANML), and 854 to 874 (VFGLPPCTWPFCLSALTFLLL).

This sequence belongs to the urea transporter family. In terms of assembly, interacts with SNAPIN which enhances its urea transport activity. In terms of tissue distribution, epressed in the inner medulla of the kidney (at protein level). As to expression, expressed in the kidney.

The protein localises to the apical cell membrane. It is found in the cell membrane. It catalyses the reaction urea(in) = urea(out). With respect to regulation, inhibited by phloretin. In terms of biological role, mediates the transport of urea driven by a concentration gradient across the cell membrane of the renal inner medullary collecting duct which is critical to the urinary concentrating mechanism. Its function is as follows. Mediates the transport of urea driven by a concentration gradient across the cell membrane of the kidney inner medullary collecting duct which is critical to the urinary concentrating mechanism. This is Urea transporter 2 (SLC14A2) from Homo sapiens (Human).